The sequence spans 392 residues: Protein O-glucosyltransferase 1 (392 aa).

Positions 1–23 (MEWWASSPLRLWLLLFLLPSAQG) are cleaved as a signal peptide. N-linked (GlcNAc...) asparagine glycans are attached at residues N40 and N53. Cystine bridges form between C49–C56, C54–C357, C102–C108, and C263–C286. Residues 103-107 (MFPSR) are interaction with the consensus sequence C-X-S-X-[PA]-C in peptide substrates. Catalysis depends on D133, which acts as the Proton donor/acceptor. The segment at 172–178 (AVWPIYP) is interaction with the consensus sequence C-X-S-X-[PA]-C in peptide substrates. UDP-alpha-D-glucose is bound at residue Y177. N204 is a glycosylation site (N-linked (GlcNAc...) asparagine). Residues S212, R218, and 274–279 (VAASFR) contribute to the UDP-alpha-D-glucose site. N373 is a glycosylation site (N-linked (GlcNAc...) asparagine). The short motif at 389-392 (KTEL) is the Prevents secretion from ER element.

Belongs to the glycosyltransferase 90 family. In terms of tissue distribution, expressed in most adult tissues at different intensities. Abundantly expressed in liver. Expressed also in brain, heart, skeletal muscle, spleen, kidney, placenta, lung and peripheral blood leukocyte. Not detectable in colon, thymus and small intestine. Expressed in the epidermis, especially in the upper parts, stratum spinosum and stratum granulosum (at protein level).

It localises to the endoplasmic reticulum lumen. It carries out the reaction L-seryl-[EGF-like domain protein] + UDP-alpha-D-xylose = 3-O-(beta-D-xylosyl)-L-seryl-[EGF-like domain protein] + UDP + H(+). The catalysed reaction is L-seryl-[EGF-like domain protein] + UDP-alpha-D-glucose = 3-O-(beta-D-glucosyl)-L-seryl-[EGF-like domain protein] + UDP + H(+). Its pathway is protein modification; protein glycosylation. Its function is as follows. Dual specificity glycosyltransferase that catalyzes the transfer of glucose and xylose from UDP-glucose and UDP-xylose, respectively, to a serine residue found in the consensus sequence of C-X-S-X-P-C. Specifically targets extracellular EGF repeats of protein such as CRB2, F7, F9 and NOTCH2. Acts as a positive regulator of Notch signaling by mediating O-glucosylation of Notch, leading to regulate muscle development. Notch glucosylation does not affect Notch ligand binding. Required during early development to promote gastrulation: acts by mediating O-glucosylation of CRB2, which is required for CRB2 localization to the cell membrane. In Homo sapiens (Human), this protein is Protein O-glucosyltransferase 1.